A 534-amino-acid chain; its full sequence is Melanopsin-B (534 aa).

The Extracellular segment spans residues Met-1 to Ser-32. A helical membrane pass occupies residues Phe-33–Tyr-53. Residues Arg-54–Tyr-64 lie on the Cytoplasmic side of the membrane. Residues Phe-65–Phe-85 form a helical membrane-spanning segment. The Extracellular segment spans residues Leu-86–Val-102. Cysteines 100 and 178 form a disulfide. Residues Tyr-103–Ile-123 traverse the membrane as a helical segment. At Asn-124 to Gln-146 the chain is on the cytoplasmic side. A helical membrane pass occupies residues Ile-147–Ser-167. Residues Ser-168–Cys-198 lie on the Extracellular side of the membrane. Residue Asn-189 is glycosylated (N-linked (GlcNAc...) asparagine). Residues Cys-199 to Ile-219 form a helical membrane-spanning segment. Residues Arg-220–Lys-250 lie on the Cytoplasmic side of the membrane. A helical transmembrane segment spans residues Ile-251 to Leu-271. At Ile-272 to Lys-286 the chain is on the extracellular side. Residues Thr-287–Ile-307 traverse the membrane as a helical segment. Lys-294 is modified (N6-(retinylidene)lysine). The Cytoplasmic portion of the chain corresponds to His-308–Ser-534. The disordered stretch occupies residues Ser-478–Glu-501. A compositionally biased stretch (basic and acidic residues) spans Glu-482–Glu-499.

Belongs to the G-protein coupled receptor 1 family. Opsin subfamily. Highest level in the iris, high level in the inner nuclear layer, possibly in horizontal cells, and lowest level in retinal pigment epithelium. Expressed in melanophore cells of the skin.

It localises to the cell membrane. In terms of biological role, photoreceptor implicated in non-image-forming responses to light. May be able to isomerize covalently bound all-trans retinal back to 11-cis retinal. The chain is Melanopsin-B from Xenopus laevis (African clawed frog).